Reading from the N-terminus, the 460-residue chain is Diguanylate cyclase DosC (460 aa).

A heme-binding site is contributed by His98. Residues 325-458 (TPLSVLIIDV…GRNRVELWKA (134 aa)) form the GGDEF domain. A Mg(2+)-binding site is contributed by Asp333. Residues Asn341 and Asp350 each coordinate substrate. Residue Asp376 participates in Mg(2+) binding. The active-site Proton acceptor is Asp376.

Heme is required as a cofactor. It depends on Mg(2+) as a cofactor.

It carries out the reaction 2 GTP = 3',3'-c-di-GMP + 2 diphosphate. It participates in purine metabolism; 3',5'-cyclic di-GMP biosynthesis. Functionally, globin-coupled heme-based oxygen sensor protein displaying diguanylate cyclase (DGC) activity in response to oxygen availability. Thus, catalyzes the synthesis of cyclic diguanylate (c-di-GMP) via the condensation of 2 GTP molecules. Cyclic-di-GMP is a second messenger which controls cell surface-associated traits in bacteria. The polypeptide is Diguanylate cyclase DosC (dosC) (Shigella boydii serotype 4 (strain Sb227)).